The sequence spans 177 residues: Nucleoside triphosphate/diphosphate phosphatase (177 aa).

The Proton donor role is filled by arginine 23. Positions 87, 103, 105, 107, 120, and 123 each coordinate Mg(2+).

This sequence belongs to the Ntdp family. Mg(2+) is required as a cofactor.

The enzyme catalyses a ribonucleoside 5'-triphosphate + H2O = a ribonucleoside 5'-diphosphate + phosphate + H(+). The catalysed reaction is a ribonucleoside 5'-diphosphate + H2O = a ribonucleoside 5'-phosphate + phosphate + H(+). Its function is as follows. Has nucleoside phosphatase activity towards nucleoside triphosphates and nucleoside diphosphates. This is Nucleoside triphosphate/diphosphate phosphatase from Streptococcus thermophilus (strain ATCC BAA-491 / LMD-9).